We begin with the raw amino-acid sequence, 345 residues long: Cytoskeleton protein RodZ (345 aa).

Over 1–111 (MNTEASQDQT…LGKKHKKRDG (111 aa)) the chain is Cytoplasmic. The HTH cro/C1-type domain maps to 19–79 (LRQARESLGL…KLVHLPEDEL (61 aa)). Positions 30 to 49 (QQTVAERLCLKVSTIRDIEE) form a DNA-binding region, H-T-H motif. Residues 112–132 (WLMSFTWLIVLVVLGLTGAWW) form a helical; Signal-anchor for type II membrane protein membrane-spanning segment. At 133–345 (WQNHQAQQAE…RVARLTVCVE (213 aa)) the chain is on the periplasmic side. Residues 151-259 (SAQLSQNGGQ…PLPTADAGVS (109 aa)) are disordered. Residues 188–225 (PLTNHSGSAITNSATTSSVPKTTSTEPVDTANTNTTMH) show a composition bias toward polar residues. The segment covering 229–241 (AASAAVSPSQVPQ) has biased composition (low complexity).

The protein belongs to the RodZ family.

Its subcellular location is the cell inner membrane. In terms of biological role, cytoskeletal protein that is involved in cell-shape control through regulation of the length of the long axis. This chain is Cytoskeleton protein RodZ, found in Yersinia pestis bv. Antiqua (strain Antiqua).